A 159-amino-acid chain; its full sequence is Cytochrome P450 monooxygenase aunB (159 aa).

Position 134 (cysteine 134) interacts with heme.

It belongs to the cytochrome P450 family. Requires heme as cofactor.

It catalyses the reaction 2 fonsecin B + NADPH + O2 + H(+) = aurasperone B + NADP(+) + 2 H2O. The catalysed reaction is 2 rubrofusarin B + NADPH + O2 + H(+) = aurasperone A + NADP(+) + 2 H2O. It participates in secondary metabolite biosynthesis. Its function is as follows. Cytochrome P450 monooxygenase; part of the gene cluster that mediates the biosynthesis of aurasperone B, a dimeric gamma-naphthopyrone. The first step in the biosynthesis of aurasperone B is the production of gamma-naphthopyrone precursor YWA1 by the non-reducing polyketide synthase albA, via condensation of one acetyl-CoA starter unit with 6 malonyl-CoA units. YWA1 is then methylated by aunE at position C-6 to yield foncesin which is further methylated at position C-8 by aunD to produce fonsecin B. A key enzyme in the biosynthetic pathway is the cytochrome P450 monooxygenase aunB which catalyzes the oxidative dimerization of fonsecin B to aurasperone B. AunB also catalyzes the oxidative dimerization of rubrofusarin B into aurasperone A. The protein is Cytochrome P450 monooxygenase aunB of Aspergillus niger (strain ATCC 1015 / CBS 113.46 / FGSC A1144 / LSHB Ac4 / NCTC 3858a / NRRL 328 / USDA 3528.7).